The sequence spans 301 residues: Ankyrin repeat domain-containing protein 29 (301 aa).

ANK repeat units lie at residues 11-41 (PLAN…DVDC), 45-74 (HGTT…DINL), 78-107 (SGTT…STEF), 111-140 (DGGT…NIHD), 144-173 (DGAT…KVNQ), 177-206 (DGTA…DRDA), 210-239 (DGTT…TLGI), and 242-271 (NGTS…DPSL).

The polypeptide is Ankyrin repeat domain-containing protein 29 (ANKRD29) (Homo sapiens (Human)).